The sequence spans 682 residues: MELITELFDEDTTLPITNLYPKKKIPQIFSVHVDDAIEQPGFRLCTYTSGGDTNRDLKMGDKMMHIVPFTLTAKGSIAKLKGLGPSPINYINSVFTVAMQTMRQYKIDACMLRILKSKTAGQARQIQVIADRLIRSRSGGRYVLLKELWDYDKKYAYILIHRKNVSLEDIPGVPEISTELFTKVESKVGDVYINKDTGAQVTKNEAIAASIAQENDKRSDQAVIVKVKISRRAIAQSQSLESSRFETPMFQKFEASAAELNKPADAPLISDSNELTVISTSGFALENALSSVTAGMAFREASIIPEDKESIINAEIKNKALERLRKESITSIKTLETIASIVDDTLEKYKGAWFERNINKHSHLNQDAANELVQNSWNAIKTKIIRRELRGYALTAGWSLHPIVENKDSSKYTPAQKRGIREYVGSGYVDINNALLGLYNPDERTSILTASDIEKAIDNLDSAFKNGERLPKGITLYRSQRMLPSIYEAMVKNRVFYFRNFVSTSLYPNIFGTWMTDSSIGVLPDEKRLSVSIDKTDEGLVNSSDNLVGIGWVITGADKVNVVLPGGSLAPSNEMEVILPRGLMVKVNKITDASYNDGTVKTNNKLIQAEVMTTEELTESVIYDGDHLMETGELVTMTGDIEDRVDFASFVSSNVKQKVESSLGIIASCIDIANMPYKFVQG.

In terms of domain architecture, TR mART core spans 383–614 (KIIRRELRGY…KLIQAEVMTT (232 aa)). Residues arginine 478, serine 503, and glutamate 576 contribute to the active site.

The protein belongs to the Tevenvirinae NAD(+)--arginine ADP-ribosyltransferase family. Proteolytic cleavages at the N- and C-termini by the prohead core protein protease give rise to the mature enzyme.

It is found in the virion. The catalysed reaction is L-arginyl-[protein] + NAD(+) = N(omega)-(ADP-D-ribosyl)-L-arginyl-[protein] + nicotinamide + H(+). ADP-ribosyltransferase that efficiently ADP-ribosylates one of the two alpha subunits of host RNA polymerase RPOA on an arginine located in the C-terminal region. ADP-ribosylation of RPOA alpha subunit enhances the transcription of viral early genes. Also ribosylates RPOA subunits beta, beta' and sigma 70 and performs an autoribosylation reaction. Additional in-vitro identified targets include proteins involved in either translation or cellular metabolism such as elongation factor-Tu or GroeL. Mono-ADP-ribosylates host MAZF which may inactivate the latter. The sequence is that of NAD(+)--arginine ADP-ribosyltransferase (alt) from Escherichia coli (Bacteriophage T4).